A 766-amino-acid polypeptide reads, in one-letter code: Flocculation suppression protein (766 aa).

5 disordered regions span residues 1 to 52 (MSEE…HGSK), 129 to 181 (HDHS…PTKI), 203 to 247 (KRRA…SSNS), 547 to 619 (KPVP…SISG), and 657 to 766 (SVTP…KVKM). 2 stretches are compositionally biased toward low complexity: residues 8-19 (SAPAPASTPAPA) and 134-147 (NDAN…TNDD). Residues 64–186 (IFIHKLYQIL…NPTKIWEFKH (123 aa)) mediate DNA binding. Basic and acidic residues predominate over residues 171–181 (QEKEKSNPTKI). The segment covering 208 to 224 (SRNNSSINSRKNSSNQN) has biased composition (low complexity). Ser-220 is subject to Phosphoserine. The span at 236-247 (SSIQDPSTSSNS) shows a compositional bias: polar residues. Ser-556 carries the phosphoserine modification. Residues 679-699 (AVSSNLINSPMNVEHSSSLSQ) are compositionally biased toward polar residues. Residues 708 to 719 (LPQPSLPTTSTT) are compositionally biased toward low complexity. Phosphoserine is present on Ser-733. The span at 738–750 (LLNQEDSSTSSAD) shows a compositional bias: polar residues.

The protein in the N-terminal section; belongs to the HSF family.

It localises to the nucleus. Involved in cell surface assembly and regulation of the gene related to flocculation (asexual cell aggregation). Mutations in SFL1 causes constitutive cell aggregation. The polypeptide is Flocculation suppression protein (SFL1) (Saccharomyces cerevisiae (strain ATCC 204508 / S288c) (Baker's yeast)).